Reading from the N-terminus, the 371-residue chain is Probable RNA 3'-terminal phosphate cyclase-like protein (371 aa).

This sequence belongs to the RNA 3'-terminal cyclase family. Type 2 subfamily. Part of the small subunit (SSU) processome, composed of more than 70 proteins and the RNA chaperone small nucleolar RNA (snoRNA) U3.

The protein resides in the nucleus. Its subcellular location is the nucleolus. In terms of biological role, part of the small subunit (SSU) processome, first precursor of the small eukaryotic ribosomal subunit. During the assembly of the SSU processome in the nucleolus, many ribosome biogenesis factors, an RNA chaperone and ribosomal proteins associate with the nascent pre-rRNA and work in concert to generate RNA folding, modifications, rearrangements and cleavage as well as targeted degradation of pre-ribosomal RNA by the RNA exosome. Does not have cyclase activity. The protein is Probable RNA 3'-terminal phosphate cyclase-like protein (rcl1) of Dictyostelium discoideum (Social amoeba).